An 836-amino-acid chain; its full sequence is Neuroligin-2 (836 aa).

An N-terminal signal peptide occupies residues 1–14; that stretch reads MWLLALCLVGLAGA. Residues 15–678 are Extracellular-facing; that stretch reads QRGGGGPGGG…DSRDYSTELS (664 aa). Residues Asn-98 and Asn-136 are each glycosylated (N-linked (GlcNAc...) asparagine). Cystine bridges form between Cys-106–Cys-141, Cys-317–Cys-328, and Cys-487–Cys-521. N-linked (GlcNAc...) asparagine glycosylation is present at Asn-522. The tract at residues 623-661 is disordered; it reads PPYATRWPPRTPGPGTSGTRRPPPPATLPPESDIDLGPR. A helical membrane pass occupies residues 679 to 699; that stretch reads VTVAVGASLLFLNILAFAALY. Residues 679–699 are required for interaction with LHFPL4; it reads VTVAVGASLLFLNILAFAALY. The Cytoplasmic portion of the chain corresponds to 700–836; it reads YKRDRRQELR…LPHPHSTTRV (137 aa). Disordered stretches follow at residues 711–735 and 791–836; these read RRLS…TAGR and LLPS…TTRV. Residues Ser-714 and Ser-719 each carry the phosphoserine modification. Residues 717-728 show a composition bias toward gly residues; it reads GGSGSGVPGGGP. The segment covering 796-819 has biased composition (pro residues); it reads LGPPPPPPPPSLHPFGPFPPPPPT. The span at 824-836 shows a compositional bias: polar residues; it reads NNTLPHPHSTTRV.

Belongs to the type-B carboxylesterase/lipase family. In terms of assembly, interacts with neurexins NRXN1, NRXN2 and NRXN3. Interaction with neurexins is mediated by heparan sulfate glycan modification on neurexin. Interacts (via its C-terminus) with DLG4/PSD-95 (via PDZ domain 3). Interacts with PATJ. Interacts with GPHN. Interacts with MDGA1 and MDGA2. Found in a complex with MAGI2 and IGSF9B, where it interacts with MAGI2 (via WW 1, WW 2 and PDZ 2 domains). Identified in a complex of 720 kDa composed of LHFPL4, NLGN2, GABRA1, GABRB2, GABRG2 and GABRB3. Interacts with LHFPL4; leading to mutual regulation of the protein level and synaptic clustering. Interacts with GABRA1. In terms of tissue distribution, detected on hippocampus neurons, especially at inhibitory synapses. Detected in retina, in the outer and inner plexiform layer. Detected in pancreas, in islet of Langerhans beta cells (at protein level). Expressed in brain, spinal cord and dorsal root ganglion. Detected in brain, and at lower levels in pancreas islet beta cells.

It localises to the cell membrane. The protein resides in the postsynaptic cell membrane. The protein localises to the presynaptic cell membrane. Transmembrane scaffolding protein involved in cell-cell interactions via its interactions with neurexin family members. Mediates cell-cell interactions both in neurons and in other types of cells, such as Langerhans beta cells. Plays a role in synapse function and synaptic signal transmission, especially via gamma-aminobutyric acid receptors (GABA(A) receptors). Functions by recruiting and clustering synaptic proteins. Promotes clustering of postsynaptic GABRG2 and GPHN. Promotes clustering of postsynaptic LHFPL4. Modulates signaling by inhibitory synapses, and thereby plays a role in controlling the ratio of signaling by excitatory and inhibitory synapses and information processing. Required for normal signal amplitude from inhibitory synapses, but is not essential for normal signal frequency. May promote the initial formation of synapses, but is not essential for this. In vitro, triggers the de novo formation of presynaptic structures. Mediates cell-cell interactions between Langerhans beta cells and modulates insulin secretion. In Rattus norvegicus (Rat), this protein is Neuroligin-2 (Nlgn2).